Here is an 883-residue protein sequence, read N- to C-terminus: 3-hydroxy-3-methylglutaryl-coenzyme A reductase (883 aa).

Residues 1–9 (MLSRLFRMH) lie on the Cytoplasmic side of the membrane. A helical transmembrane segment spans residues 10–39 (GQFVASHPWEVIVGTVTLTICMMSMNMFTG). Residues 40 to 56 (NDKICGWNYACPKFEED) are Lumenal-facing. A helical membrane pass occupies residues 57-78 (VLSSDIIILTITRCIAILYIYF). Residues 79 to 89 (QFQNLRQLGSK) are Cytoplasmic-facing. The helical transmembrane segment at 90-114 (YILGIAGLFTIFSSFVFSTVVIHFL) threads the bilayer. Over 115-123 (DKELTGLNE) the chain is Lumenal. A helical membrane pass occupies residues 124–149 (ALPFFLLLIDLSKASALAKFALSSNS). Residues 150 to 159 (QDEVRDNIAR) are Cytoplasmic-facing. Residues 160–187 (GMAILGPTFTLEALVECLVIGVGTMSGV) traverse the membrane as a helical segment. Topologically, residues 188–191 (RQLE) are lumenal. The chain crosses the membrane as a helical span at residues 192–220 (IMCCFGCMSVLANYFAFMTFFPACVSLVL). Residues 221 to 249 (ELSRESREGRPIWQLSQFASVLEEEEDNK) are Cytoplasmic-facing. Residues 250 to 276 (PNPVTQRVKMIMSLGLVLVHAHSRWIS) form a helical membrane-spanning segment. Residues 277–316 (EPSSQNSTSISDHEVTTMLDDMMPKRVEPSMPLWQFYLSR) are Lumenal-facing. A glycan (N-linked (GlcNAc...) asparagine) is linked at Asn282. Residues 317–341 (MVTMDVEQIITLGLALLLAVKYIFF) form a helical membrane-spanning segment. The Cytoplasmic segment spans residues 342–883 (EQTETESTFS…LPGTCTKKAA (542 aa)). The segment at 373–396 (REPEQEKTVHVSTTEEASSKEETE) is disordered. Catalysis depends on charge relay system residues Glu554, Lys686, and Asp762. Catalysis depends on His861, which acts as the Proton donor.

The protein belongs to the HMG-CoA reductase family. Homotetramer. Homodimer.

The protein localises to the endoplasmic reticulum membrane. It localises to the peroxisome membrane. The enzyme catalyses (R)-mevalonate + 2 NADP(+) + CoA = (3S)-3-hydroxy-3-methylglutaryl-CoA + 2 NADPH + 2 H(+). The protein operates within metabolic intermediate biosynthesis; (R)-mevalonate biosynthesis; (R)-mevalonate from acetyl-CoA: step 3/3. Its function is as follows. Catalyzes the conversion of (3S)-hydroxy-3-methylglutaryl-CoA (HMG-CoA) to mevalonic acid, the rate-limiting step in the synthesis of cholesterol and other isoprenoids, thus plays a critical role in cellular cholesterol homeostasis. The chain is 3-hydroxy-3-methylglutaryl-coenzyme A reductase (hmgcr) from Xenopus laevis (African clawed frog).